The following is a 161-amino-acid chain: RNA pyrophosphohydrolase (161 aa).

One can recognise a Nudix hydrolase domain in the interval 12 to 154; the sequence is PYRPGVGMMI…KRKLYQAVVK (143 aa). Residues 46 to 67 carry the Nudix box motif; it reads GGIVPGETPSIAAMREMLEEIG.

The protein belongs to the Nudix hydrolase family. RppH subfamily. A divalent metal cation serves as cofactor.

Accelerates the degradation of transcripts by removing pyrophosphate from the 5'-end of triphosphorylated RNA, leading to a more labile monophosphorylated state that can stimulate subsequent ribonuclease cleavage. The chain is RNA pyrophosphohydrolase from Rickettsia rickettsii (strain Iowa).